Here is an 85-residue protein sequence, read N- to C-terminus: Sec-independent protein translocase protein TatA (85 aa).

Residues 1 to 21 traverse the membrane as a helical segment; it reads MAGLQGWQLVIIILLAILLFA. Residues 43–85 form a disordered region; that stretch reads VKQMRTEGKDAKDERSGTGSTAADEPVEGRVVDRDETDPRDQR. 2 stretches are compositionally biased toward basic and acidic residues: residues 44–58 and 69–85; these read KQMR…DERS and VEGR…RDQR.

It belongs to the TatA/E family. As to quaternary structure, the Tat system comprises two distinct complexes: a TatABC complex, containing multiple copies of TatA, TatB and TatC subunits, and a separate TatA complex, containing only TatA subunits. Substrates initially bind to the TatABC complex, which probably triggers association of the separate TatA complex to form the active translocon.

Its subcellular location is the cell membrane. In terms of biological role, part of the twin-arginine translocation (Tat) system that transports large folded proteins containing a characteristic twin-arginine motif in their signal peptide across membranes. TatA could form the protein-conducting channel of the Tat system. This is Sec-independent protein translocase protein TatA from Micrococcus luteus (strain ATCC 4698 / DSM 20030 / JCM 1464 / CCM 169 / CCUG 5858 / IAM 1056 / NBRC 3333 / NCIMB 9278 / NCTC 2665 / VKM Ac-2230) (Micrococcus lysodeikticus).